We begin with the raw amino-acid sequence, 363 residues long: 3-methyl-D-ornithine--L-lysine ligase (363 aa).

Residue Lys-10 participates in ATP binding. Residue 11 to 12 (LQ) participates in L-lysine binding. ATP is bound by residues Asp-31, 49-50 (DV), and 72-73 (EN). Glu-72 lines the L-lysine pocket. The 185-residue stretch at 85 to 269 (EEFSCPVLFD…LIELLFRAFG (185 aa)) folds into the ATP-grasp domain. Residues Lys-104, Lys-131, Ser-138, and 160-163 (EEYV) each bind ADP. Residues 169-171 (SLE) and Asp-225 contribute to the D-ornithine site. The Mg(2+) site is built by Glu-227, Glu-239, and Asp-241. Glu-239 is a binding site for ADP. D-ornithine contacts are provided by residues 243–248 (RFPSQT) and Glu-302. L-lysine contacts are provided by Ser-246 and Glu-302.

It belongs to the PylC family. It depends on Mg(2+) as a cofactor.

The enzyme catalyses (3R)-3-methyl-D-ornithine + L-lysine + ATP = (3R)-3-methyl-D-ornithyl-N(6)-L-lysine + ADP + phosphate + H(+). It functions in the pathway amino-acid biosynthesis; L-pyrrolysine biosynthesis. In terms of biological role, is required for the biosynthesis of pyrrolysine. Catalyzes the ATP-dependent ligation between (3R)-3-methyl-D-ornithine and L-lysine, leading to (3R)-3-methyl-D-ornithyl-N6-L-lysine. This is 3-methyl-D-ornithine--L-lysine ligase from Methanosarcina acetivorans (strain ATCC 35395 / DSM 2834 / JCM 12185 / C2A).